Reading from the N-terminus, the 157-residue chain is Transcriptional repressor NrdR (157 aa).

A zinc finger lies at 3–34; sequence CSNCQNKNTKVLDSRPIEEGRAIRRRRECERC. The 91-residue stretch at 49–139 folds into the ATP-cone domain; it reads LIVVKKDGVR…VYRQFKDITV (91 aa).

The protein belongs to the NrdR family. It depends on Zn(2+) as a cofactor.

In terms of biological role, negatively regulates transcription of bacterial ribonucleotide reductase nrd genes and operons by binding to NrdR-boxes. The protein is Transcriptional repressor NrdR of Oceanobacillus iheyensis (strain DSM 14371 / CIP 107618 / JCM 11309 / KCTC 3954 / HTE831).